Consider the following 337-residue polypeptide: Glutaminase-asparaginase (337 aa).

The Asparaginase/glutaminase domain occupies 10-337; the sequence is ANVVILATGG…KELQRIFWEY (328 aa). Catalysis depends on Thr-20, which acts as the Acyl-ester intermediate. Residues Ser-67 and 100-101 contribute to the substrate site; that span reads TD.

Belongs to the asparaginase 1 family. In terms of assembly, homotetramer.

The protein resides in the periplasm. The enzyme catalyses L-glutamine + H2O = L-glutamate + NH4(+). It catalyses the reaction L-asparagine + H2O = L-aspartate + NH4(+). The sequence is that of Glutaminase-asparaginase (ansB) from Pseudomonas sp. (strain ATCC 29598 / 7A).